Here is a 254-residue protein sequence, read N- to C-terminus: Ubiquinone/menaquinone biosynthesis C-methyltransferase UbiE (254 aa).

Residues Thr-77, Asp-98, 126-127 (NA), and Ser-143 each bind S-adenosyl-L-methionine.

It belongs to the class I-like SAM-binding methyltransferase superfamily. MenG/UbiE family.

The catalysed reaction is a 2-demethylmenaquinol + S-adenosyl-L-methionine = a menaquinol + S-adenosyl-L-homocysteine + H(+). It catalyses the reaction a 2-methoxy-6-(all-trans-polyprenyl)benzene-1,4-diol + S-adenosyl-L-methionine = a 5-methoxy-2-methyl-3-(all-trans-polyprenyl)benzene-1,4-diol + S-adenosyl-L-homocysteine + H(+). It functions in the pathway quinol/quinone metabolism; menaquinone biosynthesis; menaquinol from 1,4-dihydroxy-2-naphthoate: step 2/2. It participates in cofactor biosynthesis; ubiquinone biosynthesis. In terms of biological role, methyltransferase required for the conversion of demethylmenaquinol (DMKH2) to menaquinol (MKH2) and the conversion of 2-polyprenyl-6-methoxy-1,4-benzoquinol (DDMQH2) to 2-polyprenyl-3-methyl-6-methoxy-1,4-benzoquinol (DMQH2). The chain is Ubiquinone/menaquinone biosynthesis C-methyltransferase UbiE from Hydrogenovibrio crunogenus (strain DSM 25203 / XCL-2) (Thiomicrospira crunogena).